The sequence spans 264 residues: Stage IV sporulation protein FA (264 aa).

A compositionally biased stretch (basic and acidic residues) spans 1–10 (MSHRADEIRK). The interval 1–37 (MSHRADEIRKRLEKRRKQLSGSKRFSTQTVSEKQKPP) is disordered. Topologically, residues 1–72 (MSHRADEIRK…GKHPLVKTDS (72 aa)) are mother cell cytoplasmic. Polar residues predominate over residues 19–31 (LSGSKRFSTQTVS). The helical transmembrane segment at 73 to 90 (IILKCLLSACLVLVSAIA) threads the bilayer. Residues 91-264 (YKTNIGPVSQ…IDPIQVISFE (174 aa)) are Forespore intermembrane space-facing.

In terms of assembly, forms a complex with BofA and SpoIVFB localized in the mother-cell membrane surrounding the forespore. In terms of processing, may be degraded by FtsH. It is stabilized by an ftsH disruption mutant, and in a probably independent fashion, by overexpression of BofA.

It localises to the forespore outer membrane. In terms of biological role, implicated in the coupling of mother cell to forespore gene expression. Required for spore formation at 37 degrees Celsius, but not at 30 degrees Celsius. SpoIVFA plays a central role in both maintaining the SpoIVFA/BofA/SpoIVFB complex and anchoring it to the outer forespore membrane. SpoIVFA brings BofA into close proximity to SpoIVFB, allowing BofA to inhibit SpoIVFB. Increased accumulation of SpoIVFA seems to inhibit the activity of SpoIVFB and thus regulates the activation of sigma-K. The polypeptide is Stage IV sporulation protein FA (spoIVFA) (Bacillus subtilis (strain 168)).